Here is a 225-residue protein sequence, read N- to C-terminus: 7-cyano-7-deazaguanine synthase (225 aa).

Residue 10 to 20 (LSGGIDSATAA) coordinates ATP. Zn(2+) contacts are provided by Cys-191, Cys-199, Cys-202, and Cys-205.

The protein belongs to the QueC family. It depends on Zn(2+) as a cofactor.

The enzyme catalyses 7-carboxy-7-deazaguanine + NH4(+) + ATP = 7-cyano-7-deazaguanine + ADP + phosphate + H2O + H(+). Its pathway is purine metabolism; 7-cyano-7-deazaguanine biosynthesis. Its function is as follows. Catalyzes the ATP-dependent conversion of 7-carboxy-7-deazaguanine (CDG) to 7-cyano-7-deazaguanine (preQ(0)). This chain is 7-cyano-7-deazaguanine synthase, found in Prochlorococcus marinus (strain NATL2A).